Consider the following 90-residue polypeptide: Nodulation protein F (90 aa).

The Carrier domain occupies 4 to 89 (QLESEIIGII…RHSGSHPRLA (86 aa)). S46 carries the post-translational modification O-(pantetheine 4'-phosphoryl)serine. Residues 65–90 (RDEHGRGVVGSPERRRHSGSHPRLAH) form a disordered region. Residues 78–90 (RRRHSGSHPRLAH) are compositionally biased toward basic residues.

Post-translationally, 4'-phosphopantetheine is transferred from CoA to a specific serine of apo-NodF.

In terms of biological role, proposed to synthesize nod factor fatty acyl chain. Involved in trans-2,trans-4,trans-6,cis-11-octadecatetraenoic acid biosynthesis. This Rhizobium meliloti (Ensifer meliloti) protein is Nodulation protein F (nodF).